Consider the following 1067-residue polypeptide: Kinesin-like protein KIF11-A (1067 aa).

The Kinesin motor domain occupies Asn18–Ile359. Gly105–Thr112 contributes to the ATP binding site. Coiled coils occupy residues Val365–Phe480, Asp692–Gly721, and Gln882–Ser915. A Phosphothreonine; by CDK1 modification is found at Thr937. Ser1046 carries the post-translational modification Phosphoserine; by NEK6.

It belongs to the TRAFAC class myosin-kinesin ATPase superfamily. Kinesin family. BimC subfamily. As to quaternary structure, heterotetramer of two heavy and two light chains. Interacts with aurka. Phosphorylation of Thr-937 during mitosis controls the association of this protein with the spindle apparatus. Post-translationally, a subset of this protein primarily localized at the spindle pole is phosphorylated by NEK6 during mitosis. In terms of processing, phosphorylated on a serine residue by aurka. As to expression, highly expressed in unfertilized eggs, especially in the germinal vesicle and in the radial yolk-poor channels. Also present in testis.

It localises to the cytoplasm. It is found in the cytoskeleton. The protein resides in the spindle pole. Its function is as follows. Plus end-directed motor protein required for establishing a bipolar spindle. Associates with both interphase and spindle microtubules. May be involved in nuclear divisions taking place during the development of unfertilized eggs. Required in non-mitotic cells for transport of secretory proteins from the Golgi complex to the cell surface. The sequence is that of Kinesin-like protein KIF11-A (kif11-a) from Xenopus laevis (African clawed frog).